A 2784-amino-acid polypeptide reads, in one-letter code: Cilia- and flagella-associated protein 46 (2784 aa).

Residues 129–162 form a TPR 1 repeat; it reads GLEVAAANQPRYQFLVYNASVHHWRVVAPLHRDG. Residues 242–268 adopt a coiled-coil conformation; it reads TAAAAKLTELQKDVARLQVHLATLAAA. Residues 401-434 form a TPR 2 repeat; the sequence is SLAPVVVAAHVKALEQLEDVLTTFTKLADVEGIH. Disordered stretches follow at residues 543-562 and 581-607; these read SAEP…RSKE and RDLP…AAAR. The span at 585–595 shows a compositional bias: pro residues; that stretch reads HPPPPAPTDPP. Residues 644 to 665 adopt a coiled-coil conformation; the sequence is AVDREMVLLQAQLAHYEAEAAI. Positions 670–697 are disordered; that stretch reads RRRADISPPTRPSPPEVDGEGVRQPPAT. The TPR 3 repeat unit spans residues 708–743; that stretch reads ASVRSMRGAMSVNEPWLTLNNAVQLYNAALPLMQQH. Disordered regions lie at residues 799–837 and 929–954; these read DAGQ…PAYK and RVNE…KPHG. Residues 802–817 are compositionally biased toward acidic residues; the sequence is QELEDDDDEDSLDEDG. The stretch at 976-1009 is one TPR 4 repeat; it reads LELWAKMARAVADAGVWPAALECSAAALAALPGA. A compositionally biased stretch (acidic residues) spans 1275–1288; it reads TGDLDGDGTDDEDD. 2 disordered regions span residues 1275-1351 and 1640-1673; these read TGDL…RVPE and AAGG…HGQL. Positions 1298-1311 are enriched in gly residues; sequence SGGGSSSGRAGGGF. Over residues 1646 to 1658 the composition is skewed to basic and acidic residues; it reads GGRESPSPHDDGI. TPR repeat units follow at residues 1712–1745 and 1854–1886; these read HDVW…AADC and MEML…LAAR. The stretch at 1961–1984 forms a coiled coil; sequence RLAEVQLAAAEERERLAGADREKA. 4 disordered regions span residues 2068 to 2112, 2278 to 2303, 2346 to 2389, and 2441 to 2465; these read RPFV…EAAA, ATAE…PAAA, AAKG…PGAA, and LPLP…AGPT. The span at 2069–2083 shows a compositional bias: pro residues; sequence PFVPPPKPPGAPKRP. The span at 2087 to 2096 shows a compositional bias: acidic residues; it reads AEEEEDEEGP. Over residues 2097-2112 the composition is skewed to low complexity; that stretch reads DTAAADAAAEAAEAAA. Residues 2378 to 2389 show a composition bias toward low complexity; sequence SKQGPKSGPGAA. The span at 2450-2461 shows a compositional bias: basic and acidic residues; sequence DGKKEKKDKKEA. The stretch at 2613 to 2646 is one TPR 7 repeat; that stretch reads ATGGPCTGLLFLGVGRFAAHVPPAVLASAPLGGC.

The protein belongs to the CFAP46 family. As to quaternary structure, part of the PDCP1 complex composed of CFAP46, CFAP54, CFAP74 and CFAP221; the PDCP1 complex binds calmodulin.

It localises to the cytoplasm. The protein localises to the cytoskeleton. It is found in the cilium axoneme. Functionally, as part of the central apparatus of the cilium axoneme plays a role in cilium movement and thereby cell motility. The polypeptide is Cilia- and flagella-associated protein 46 (Chlamydomonas reinhardtii (Chlamydomonas smithii)).